The sequence spans 690 residues: Glycine--tRNA ligase beta subunit (690 aa).

The protein belongs to the class-II aminoacyl-tRNA synthetase family. As to quaternary structure, tetramer of two alpha and two beta subunits.

The protein localises to the cytoplasm. It catalyses the reaction tRNA(Gly) + glycine + ATP = glycyl-tRNA(Gly) + AMP + diphosphate. The chain is Glycine--tRNA ligase beta subunit from Buchnera aphidicola subsp. Acyrthosiphon pisum (strain Tuc7).